The primary structure comprises 503 residues: ATP synthase subunit alpha (503 aa).

169 to 176 (GDRKTGKT) contributes to the ATP binding site.

The protein belongs to the ATPase alpha/beta chains family. As to quaternary structure, F-type ATPases have 2 components, CF(1) - the catalytic core - and CF(0) - the membrane proton channel. CF(1) has five subunits: alpha(3), beta(3), gamma(1), delta(1), epsilon(1). CF(0) has three main subunits: a(1), b(2) and c(9-12). The alpha and beta chains form an alternating ring which encloses part of the gamma chain. CF(1) is attached to CF(0) by a central stalk formed by the gamma and epsilon chains, while a peripheral stalk is formed by the delta and b chains.

The protein resides in the cell membrane. It carries out the reaction ATP + H2O + 4 H(+)(in) = ADP + phosphate + 5 H(+)(out). Its function is as follows. Produces ATP from ADP in the presence of a proton gradient across the membrane. The alpha chain is a regulatory subunit. The chain is ATP synthase subunit alpha from Lactobacillus helveticus (strain DPC 4571).